The chain runs to 55 residues: Small ribosomal subunit protein uS14 (55 aa).

The disordered stretch occupies residues 1-20 (MSFEPSGPHSHRKPFGKGSR). Zn(2+) is bound by residues C22, C25, C38, and C41.

Belongs to the universal ribosomal protein uS14 family. Requires Zn(2+) as cofactor.

The sequence is that of Small ribosomal subunit protein uS14 (RPS29) from Encephalitozoon cuniculi (strain GB-M1) (Microsporidian parasite).